We begin with the raw amino-acid sequence, 200 residues long: Holliday junction resolvase RecU (200 aa).

Mg(2+) is bound by residues T82, D84, E97, and Q116.

It belongs to the RecU family. The cofactor is Mg(2+).

It localises to the cytoplasm. It carries out the reaction Endonucleolytic cleavage at a junction such as a reciprocal single-stranded crossover between two homologous DNA duplexes (Holliday junction).. Endonuclease that resolves Holliday junction intermediates in genetic recombination. Cleaves mobile four-strand junctions by introducing symmetrical nicks in paired strands. Promotes annealing of linear ssDNA with homologous dsDNA. Required for DNA repair, homologous recombination and chromosome segregation. The polypeptide is Holliday junction resolvase RecU (Streptococcus sanguinis (strain SK36)).